Here is a 339-residue protein sequence, read N- to C-terminus: Transcription factor IIIA (339 aa).

9 consecutive C2H2-type zinc fingers follow at residues 13-37, 43-67, 73-98, 105-129, 135-159, 162-188, 192-214, 221-246, and 252-276; these read YICS…LCKH, FPCK…SITH, FKCD…NRFH, YVCH…QFTH, YKCP…EKVH, YPCK…KECH, VMCD…KKTH, YCCP…QSFH, and FACE…SVVH. Composition is skewed to basic and acidic residues over residues 275–288 and 305–316; these read VHDP…EKCP and KSKEKSAAKATE. The tract at residues 275–339 is disordered; sequence VHDPEKRKLK…ETKGSLVIEK (65 aa).

As to expression, synthesized in oocytes and, in much lower levels, in somatic cells.

The protein resides in the nucleus. Involved in ribosomal large subunit biogenesis. Interacts with the internal control region (ICR) of approximately 50 bases within the 5S RNA genes, is required for correct transcription of these genes by RNA polymerase III. Also binds the transcribed 5S RNA's. This is Transcription factor IIIA (gtf3a) from Xenopus borealis (Kenyan clawed frog).